A 104-amino-acid polypeptide reads, in one-letter code: Ribonuclease P protein component 4 (104 aa).

Residues C63, C66, C89, and C92 each coordinate Zn(2+).

Belongs to the eukaryotic/archaeal RNase P protein component 4 family. In terms of assembly, consists of a catalytic RNA component and at least 4-5 protein subunits. It depends on Zn(2+) as a cofactor.

Its subcellular location is the cytoplasm. It carries out the reaction Endonucleolytic cleavage of RNA, removing 5'-extranucleotides from tRNA precursor.. Part of ribonuclease P, a protein complex that generates mature tRNA molecules by cleaving their 5'-ends. The protein is Ribonuclease P protein component 4 of Methanoregula boonei (strain DSM 21154 / JCM 14090 / 6A8).